Reading from the N-terminus, the 275-residue chain is Ribosomal RNA small subunit methyltransferase A (275 aa).

S-adenosyl-L-methionine contacts are provided by Asn-28, Leu-30, Gly-55, Glu-77, Asp-103, and Asn-123.

Belongs to the class I-like SAM-binding methyltransferase superfamily. rRNA adenine N(6)-methyltransferase family. RsmA subfamily.

Its subcellular location is the cytoplasm. It catalyses the reaction adenosine(1518)/adenosine(1519) in 16S rRNA + 4 S-adenosyl-L-methionine = N(6)-dimethyladenosine(1518)/N(6)-dimethyladenosine(1519) in 16S rRNA + 4 S-adenosyl-L-homocysteine + 4 H(+). Specifically dimethylates two adjacent adenosines (A1518 and A1519) in the loop of a conserved hairpin near the 3'-end of 16S rRNA in the 30S particle. May play a critical role in biogenesis of 30S subunits. In Rhizobium johnstonii (strain DSM 114642 / LMG 32736 / 3841) (Rhizobium leguminosarum bv. viciae), this protein is Ribosomal RNA small subunit methyltransferase A.